The chain runs to 205 residues: D-alanine--D-alanine ligase (205 aa).

Residues lysine 111–phenylalanine 205 form the ATP-grasp domain. Residue methionine 139–valine 190 participates in ATP binding.

This sequence belongs to the D-alanine--D-alanine ligase family. Mg(2+) serves as cofactor. It depends on Mn(2+) as a cofactor.

The protein localises to the cytoplasm. It carries out the reaction 2 D-alanine + ATP = D-alanyl-D-alanine + ADP + phosphate + H(+). It functions in the pathway cell wall biogenesis; peptidoglycan biosynthesis. Functionally, cell wall formation. In Anaplasma centrale, this protein is D-alanine--D-alanine ligase (ddl).